The sequence spans 468 residues: Adenosylhomocysteinase (468 aa).

Substrate contacts are provided by threonine 63, aspartate 139, and glutamate 164. 165-167 lines the NAD(+) pocket; the sequence is TTT. Lysine 194 and aspartate 198 together coordinate substrate. NAD(+) contacts are provided by residues asparagine 199, 228 to 233, glutamate 251, asparagine 300, 321 to 323, and asparagine 374; these read GYGDVG and IGH.

Belongs to the adenosylhomocysteinase family. NAD(+) serves as cofactor.

It localises to the cytoplasm. The enzyme catalyses S-adenosyl-L-homocysteine + H2O = L-homocysteine + adenosine. It participates in amino-acid biosynthesis; L-homocysteine biosynthesis; L-homocysteine from S-adenosyl-L-homocysteine: step 1/1. Functionally, may play a key role in the regulation of the intracellular concentration of adenosylhomocysteine. This chain is Adenosylhomocysteinase, found in Stutzerimonas stutzeri (strain A1501) (Pseudomonas stutzeri).